We begin with the raw amino-acid sequence, 147 residues long: Large ribosomal subunit protein uL15 (147 aa).

The disordered stretch occupies residues 1 to 62 (MKLHELKPAQ…GQQPLSRRMP (62 aa)). Gly residues-rich tracts occupy residues 21-31 (RGIGSGTGKTS) and 42-52 (AGGGVRPGFEG).

Belongs to the universal ribosomal protein uL15 family. In terms of assembly, part of the 50S ribosomal subunit.

In terms of biological role, binds to the 23S rRNA. The polypeptide is Large ribosomal subunit protein uL15 (Desulfitobacterium hafniense (strain DSM 10664 / DCB-2)).